Reading from the N-terminus, the 179-residue chain is Large ribosomal subunit protein uL5 (179 aa).

This sequence belongs to the universal ribosomal protein uL5 family. As to quaternary structure, part of the 50S ribosomal subunit; part of the 5S rRNA/L5/L18/L25 subcomplex. Contacts the 5S rRNA and the P site tRNA. Forms a bridge to the 30S subunit in the 70S ribosome.

Functionally, this is one of the proteins that bind and probably mediate the attachment of the 5S RNA into the large ribosomal subunit, where it forms part of the central protuberance. In the 70S ribosome it contacts protein S13 of the 30S subunit (bridge B1b), connecting the 2 subunits; this bridge is implicated in subunit movement. Contacts the P site tRNA; the 5S rRNA and some of its associated proteins might help stabilize positioning of ribosome-bound tRNAs. The protein is Large ribosomal subunit protein uL5 of Prochlorococcus marinus (strain NATL2A).